A 332-amino-acid chain; its full sequence is Phosphate acyltransferase (332 aa).

Belongs to the PlsX family. Homodimer. Probably interacts with PlsY.

The protein resides in the cytoplasm. The enzyme catalyses a fatty acyl-[ACP] + phosphate = an acyl phosphate + holo-[ACP]. The protein operates within lipid metabolism; phospholipid metabolism. Catalyzes the reversible formation of acyl-phosphate (acyl-PO(4)) from acyl-[acyl-carrier-protein] (acyl-ACP). This enzyme utilizes acyl-ACP as fatty acyl donor, but not acyl-CoA. This chain is Phosphate acyltransferase, found in Oceanobacillus iheyensis (strain DSM 14371 / CIP 107618 / JCM 11309 / KCTC 3954 / HTE831).